The primary structure comprises 539 residues: Glutamate/serine transporter AimA (539 aa).

13 helical membrane-spanning segments follow: residues 11-31, 36-56, 82-102, 137-157, 164-184, 199-219, 238-258, 283-303, 350-370, 401-421, 424-444, 457-477, and 486-506; these read FSLMMVGLGSMIGSGWLFGAW, IAGPAAIISWVIGMVVILFIA, SFIGFIAGWANWIAIVSVIPV, AFASVLLLIYFLLNYWTVNLF, ITIFKIIIPGLTIGALLFVGF, GWASVLTAVATSGIVFAFNGF, IAVVGSLFVATVIYVLLQIAF, LAIALNINWLVIVLYADAFVS, LIVSFIFLFLFRGWGVLAEII, LKGLNVIAPLGFIFASLVLYW, WPLTGQVLFIILIGLPIYFYY, FKAGVWMVFYLLAMMVISYLG, and VIHYGWDMVLIAMVSLVFYVW.

Belongs to the amino acid-polyamine-organocation (APC) superfamily. AGT (TC 2.A.3.11) family.

It localises to the cell membrane. Major glutamate and serine transporter. Cannot transport threonine. AimA is the major glutamate transporter under standard growth conditions when glutamate is not limiting in the medium. The protein is Glutamate/serine transporter AimA of Bacillus subtilis (strain 168).